Consider the following 395-residue polypeptide: Acetate kinase 1 (395 aa).

N8 is a Mg(2+) binding site. An ATP-binding site is contributed by K15. R89 is a substrate binding site. Residue D146 is the Proton donor/acceptor of the active site. Residues 206–210 (HIGNG), 283–285 (DMR), and 330–334 (GIGEN) contribute to the ATP site. E382 contributes to the Mg(2+) binding site.

It belongs to the acetokinase family. As to quaternary structure, homodimer. It depends on Mg(2+) as a cofactor. Mn(2+) serves as cofactor.

The protein localises to the cytoplasm. It carries out the reaction acetate + ATP = acetyl phosphate + ADP. It participates in metabolic intermediate biosynthesis; acetyl-CoA biosynthesis; acetyl-CoA from acetate: step 1/2. Functionally, catalyzes the formation of acetyl phosphate from acetate and ATP. Can also catalyze the reverse reaction. The chain is Acetate kinase 1 from Lactococcus lactis subsp. lactis (strain IL1403) (Streptococcus lactis).